Here is a 345-residue protein sequence, read N- to C-terminus: Diacylglycerol O-acyltransferase 1 (345 aa).

Residues 1–49 are Cytoplasmic-facing; it reads MSEETSIPGIIASTPPISKDSRRNVSHWLQALAVFLHSVSLTLTASWYT. A helical membrane pass occupies residues 50–70; sequence VLWAFLPFWPFLIVYLIWLIY. The Lumenal segment spans residues 71-113; that stretch reads DDGFVTGKDRQKRWLRNAPPYRWFCHYFPIRLHKTTELDSEKN. A helical membrane pass occupies residues 114 to 134; the sequence is YIFGYHPHGIISLGAFGGFAS. Topologically, residues 135–141 are cytoplasmic; sequence EGADFSK. The chain crosses the membrane as a helical span at residues 142 to 162; sequence LFPGINVSVLTLNSNFYVPVY. Topologically, residues 163 to 216 are lumenal; that stretch reads RDYLMALNINSVSKKSCVSILSRKPGDSVLIVIGGAQESLLSRPGQNNLVLKKR. Residues 217–237 form a helical membrane-spanning segment; the sequence is FGFVKLAFLTGSSLVPCFAFG. Residues 238–345 are Cytoplasmic-facing; that stretch reads ESDIFEQVDN…NRISELKLSA (108 aa).

Belongs to the diacylglycerol acyltransferase family.

The protein localises to the lipid droplet. Its subcellular location is the endoplasmic reticulum membrane. It carries out the reaction an acyl-CoA + a 1,2-diacyl-sn-glycerol = a triacyl-sn-glycerol + CoA. It catalyses the reaction a 2-acylglycerol + an acyl-CoA = a 1,2-diacyl-sn-glycerol + CoA. It participates in glycerolipid metabolism; triacylglycerol biosynthesis. In terms of biological role, catalyzes the terminal and only committed step in triacylglycerol (TAG) synthesis by using diacylglycerol (DAG) and fatty acyl-CoA as substrates. Required for storage lipid synthesis. Major DAG esterifying enzyme in stationary phase when TAG production is particularly active. Involved in lipid particle synthesis from the endoplasmic reticulum, promoting localized TAG production at discrete ER subdomains. The protein is Diacylglycerol O-acyltransferase 1 (dga1) of Schizosaccharomyces pombe (strain 972 / ATCC 24843) (Fission yeast).